The following is a 155-amino-acid chain: Aspartate carbamoyltransferase regulatory chain (155 aa).

Zn(2+) contacts are provided by Cys113, Cys118, Cys141, and Cys144.

It belongs to the PyrI family. Contains catalytic and regulatory chains. Zn(2+) is required as a cofactor.

Functionally, involved in allosteric regulation of aspartate carbamoyltransferase. This is Aspartate carbamoyltransferase regulatory chain from Methanococcus aeolicus (strain ATCC BAA-1280 / DSM 17508 / OCM 812 / Nankai-3).